Consider the following 214-residue polypeptide: Histone H1.1 (214 aa).

Residues 1–43 (MSETAPVPQPASVAPEKPAATKKTRKPAKAAVPRKKPAGPSVS) are disordered. N-acetylserine is present on Ser-2. Ser-2 and Ser-12 each carry phosphoserine. Lys-17 carries the N6-acetyllysine modification. The segment covering 20–37 (ATKKTRKPAKAAVPRKKP) has biased composition (basic residues). Position 36 is an N6-(beta-hydroxybutyryl)lysine (Lys-36). The 74-residue stretch at 38-111 (AGPSVSELIV…GAAGSFKLNK (74 aa)) folds into the H15 domain. The residue at position 43 (Ser-43) is a Phosphoserine. The residue at position 54 (Lys-54) is an N6-(beta-hydroxybutyryl)lysine. A Citrulline modification is found at Arg-56. Lys-66 carries the post-translational modification N6-(beta-hydroxybutyryl)lysine. The residue at position 67 (Ser-67) is a Phosphoserine. Lys-77 bears the N6-acetyllysine mark. Lys-87 carries the N6-(beta-hydroxybutyryl)lysine modification. N6-(beta-hydroxybutyryl)lysine; alternate is present on Lys-92. Lys-92 bears the N6-acetyllysine; alternate mark. The disordered stretch occupies residues 93–214 (GTLVQTKGTG…KPKKAAPKKK (122 aa)). Ser-106 carries the post-translational modification Phosphoserine. Lys-108 is subject to N6-(beta-hydroxybutyryl)lysine. Positions 116-144 (KASTTKVTVKAKASGAAKKPKKTAGAAAK) are enriched in low complexity. An N6-acetyllysine modification is found at Lys-121. Basic residues-rich tracts occupy residues 145 to 179 (KTVK…KKVA) and 186 to 214 (KAVK…PKKK). Position 202 is a phosphothreonine (Thr-202).

It belongs to the histone H1/H5 family. In terms of assembly, interacts with DFFB. In terms of processing, H1 histones are progressively phosphorylated during the cell cycle, becoming maximally phosphorylated during late G2 phase and M phase, and being dephosphorylated sharply thereafter. Post-translationally, citrullination at Arg-56 (H1R54ci) by PADI4 takes place within the DNA-binding site of H1 and results in its displacement from chromatin and global chromatin decondensation, thereby promoting pluripotency and stem cell maintenance.

Its subcellular location is the nucleus. It is found in the chromosome. H1 histones bind to linker DNA between nucleosomes forming the macromolecular structure known as the chromatin fiber. H1 histones are necessary for the condensation of nucleosome chains into higher-order structured fibers. Also acts as a regulator of individual gene transcription through chromatin remodeling. The chain is Histone H1.1 from Rattus norvegicus (Rat).